A 548-amino-acid chain; its full sequence is MKKVTAMLFSMAVGLNAGSAAAKAKASEEQETDVLLIGGGIMSATLGTYLRELEPEWSMTMVERLDSVAQESSNGWNNAGTGHSALMELNYTPQNADGSISIEKAVAINEAFQISRQFWAHQVERGVLRTPRSFINTVPHMSFVWGEDNVNFLRARYAALQQSSLFRGMRYSEDHEQIKEWAPLVMEGRDPQQKVAATRTEIGTDVNYGEITRQLIASLQKKSNFSLQLSSEVRALKRNGDKSWTVTIADLKNGTVHNIRAKFVFIGAGGAALKLLQESGIPEAKDYAGFPVGGQFLVSENPDVVNHHLAKVYGKASVGAPPMSVPHIDTRVLDGKRVVLFGPFATFSTKFLKNGSLWDLMSSTTTSNVLPMMHVGLDNFDLVKYLISQVMLSEDDRFAALKEYYPQAKKEDWRLWQAGQRVQIIKRDADKGGVLRLGTEVVSDQQGTIAALLGASPGASTAAPIMLNLLEKVFGDRVSSPQWQATLKAIVPSYGSKLNGNVAATERELQYTSEVLGLKYDKPQAADSTPKAQLKPQPARKEVADIAL.

Residues 522 to 548 (KPQAADSTPKAQLKPQPARKEVADIAL) are disordered. Residues 539 to 548 (ARKEVADIAL) show a composition bias toward basic and acidic residues.

It belongs to the MQO family. The cofactor is FAD.

The enzyme catalyses (S)-malate + a quinone = a quinol + oxaloacetate. Its pathway is carbohydrate metabolism; tricarboxylic acid cycle; oxaloacetate from (S)-malate (quinone route): step 1/1. In Escherichia fergusonii (strain ATCC 35469 / DSM 13698 / CCUG 18766 / IAM 14443 / JCM 21226 / LMG 7866 / NBRC 102419 / NCTC 12128 / CDC 0568-73), this protein is Probable malate:quinone oxidoreductase.